The primary structure comprises 225 residues: Holliday junction branch migration complex subunit RuvA (225 aa).

Residues M1 to T71 form a domain I region. Residues S72 to S150 are domain II. The tract at residues K151–I161 is flexible linker. The tract at residues I161–R225 is domain III.

The protein belongs to the RuvA family. Homotetramer. Forms an RuvA(8)-RuvB(12)-Holliday junction (HJ) complex. HJ DNA is sandwiched between 2 RuvA tetramers; dsDNA enters through RuvA and exits via RuvB. An RuvB hexamer assembles on each DNA strand where it exits the tetramer. Each RuvB hexamer is contacted by two RuvA subunits (via domain III) on 2 adjacent RuvB subunits; this complex drives branch migration. In the full resolvosome a probable DNA-RuvA(4)-RuvB(12)-RuvC(2) complex forms which resolves the HJ.

It is found in the cytoplasm. Its function is as follows. The RuvA-RuvB-RuvC complex processes Holliday junction (HJ) DNA during genetic recombination and DNA repair, while the RuvA-RuvB complex plays an important role in the rescue of blocked DNA replication forks via replication fork reversal (RFR). RuvA specifically binds to HJ cruciform DNA, conferring on it an open structure. The RuvB hexamer acts as an ATP-dependent pump, pulling dsDNA into and through the RuvAB complex. HJ branch migration allows RuvC to scan DNA until it finds its consensus sequence, where it cleaves and resolves the cruciform DNA. The polypeptide is Holliday junction branch migration complex subunit RuvA (Prochlorococcus marinus (strain MIT 9301)).